Consider the following 457-residue polypeptide: uncharacterized protein (457 aa).

The 59-residue stretch at 6 to 64 (PVHKGEVLDVTIMDLTYQGMGVAKVDNYPIFIENALPEEKITVKVTKTTKNFAFGDVEK) folds into the TRAM domain. Gln287, Tyr316, Glu337, and Asp385 together coordinate S-adenosyl-L-methionine. Cys412 (nucleophile) is an active-site residue.

Belongs to the class I-like SAM-binding methyltransferase superfamily. RNA M5U methyltransferase family.

This is an uncharacterized protein from Lactiplantibacillus plantarum (strain ATCC BAA-793 / NCIMB 8826 / WCFS1) (Lactobacillus plantarum).